The primary structure comprises 176 residues: Small ribosomal subunit protein uS5 (176 aa).

The region spanning 11–74 is the S5 DRBM domain; that stretch reads LSEVLVDVNR…QAAKKRMMKV (64 aa).

This sequence belongs to the universal ribosomal protein uS5 family. Part of the 30S ribosomal subunit. Contacts proteins S4 and S8.

Its function is as follows. With S4 and S12 plays an important role in translational accuracy. Functionally, located at the back of the 30S subunit body where it stabilizes the conformation of the head with respect to the body. The sequence is that of Small ribosomal subunit protein uS5 from Rickettsia conorii (strain ATCC VR-613 / Malish 7).